The chain runs to 1249 residues: Cilia- and flagella-associated protein 57 (1249 aa).

WD repeat units follow at residues 105–148 (FQVQ…AIIK), 195–233 (GESS…WETS), 335–374 (SDKQ…ISKG), 386–425 (LHSA…LELY), 427–469 (EYQE…KEYS), 471–506 (RGCK…NINI), 509–548 (GHTG…RETE), and 635–674 (AHAG…GRGI). 2 coiled-coil regions span residues 690-1056 (KTDM…KTDL) and 1094-1165 (SDLQ…SALK).

It belongs to the CFAP57 family. As to quaternary structure, may form homodimers. Associates with components of the nexin-dynein regulatory complex (N-DRC) and the CFAP184:CFAP263 complex. In terms of tissue distribution, predominanly expressed in testis, lung and skin. Weak expression in brain and kidney.

The protein resides in the cytoplasm. The protein localises to the cytoskeleton. Its subcellular location is the cilium axoneme. Functionally, associates with components of the nexin-dynein regulatory complex (N-DRC), a key regulator of ciliary/flagellar motility, and might act as an inner dynein arm (IDA) hub or linkage. The polypeptide is Cilia- and flagella-associated protein 57 (Mus musculus (Mouse)).